The chain runs to 323 residues: Pathogenicity locus probable regulatory protein WtsA (323 aa).

Residues 41-251 (VAPLEIDLVL…ELKTAAKRFT (211 aa)) enclose the Sigma-54 factor interaction domain. ATP contacts are provided by residues 52-59 (GETGTGKD) and 123-132 (EIDSMPLSLQ). Positions 293-312 (IDEAAMELGMPLRTLYHRIK) form a DNA-binding region, H-T-H motif.

Functionally, positive activator of wtsB involved in plant pathogenicity. Probably interacts with sigma-54. This is Pathogenicity locus probable regulatory protein WtsA (wtsA) from Pantoea stewartii subsp. stewartii (Erwinia stewartii).